The chain runs to 538 residues: ATP-dependent rRNA helicase RRP3 (538 aa).

Residues 1–11 show a composition bias toward basic residues; it reads MSSAKRVKLSH. Residues 1–112 are disordered; it reads MSSAKRVKLS…SKEETPTKSF (112 aa). The span at 34 to 47 shows a compositional bias: low complexity; sequence KKITQAPKAAAPIK. Acidic residues predominate over residues 53-85; the sequence is AEEDDDDDDKDDKDEEDEEQNDDSSDEASENDD. Positions 92–112 are enriched in basic and acidic residues; it reads EATKEGQTELPSKEETPTKSF. The Q motif signature appears at 110-138; sequence KSFRDLGIVEPLCEACEALKFKKPTPIQE. The 172-residue stretch at 141–312 folds into the Helicase ATP-binding domain; it reads IPLALQGRDV…RASLRDPLKV (172 aa). ATP is bound at residue 154 to 161; sequence AETGSGKT. Positions 260 to 263 match the DEAD box motif; it reads DEAD. The Helicase C-terminal domain maps to 336–486; it reads HKDVYLIYLA…LFQPDKEEVM (151 aa). A compositionally biased stretch (basic and acidic residues) spans 498-512; that stretch reads HAREEMKALHEDRGK. Positions 498-538 are disordered; sequence HAREEMKALHEDRGKKGAVLKGRKRGSATKRRHDDMDAEEG. Over residues 513–528 the composition is skewed to basic residues; the sequence is KGAVLKGRKRGSATKR.

Belongs to the DEAD box helicase family. DDX47/RRP3 subfamily. Interacts with the SSU processome.

The protein resides in the nucleus. It carries out the reaction ATP + H2O = ADP + phosphate + H(+). Functionally, ATP-dependent rRNA helicase required for pre-ribosomal RNA processing. Involved in the maturation of the 35S-pre-rRNA and to its cleavage to mature 18S rRNA. This chain is ATP-dependent rRNA helicase RRP3, found in Pyricularia oryzae (strain 70-15 / ATCC MYA-4617 / FGSC 8958) (Rice blast fungus).